We begin with the raw amino-acid sequence, 440 residues long: General transcription factor IIE subunit 1 (440 aa).

At A2 the chain carries N-acetylalanine. Positions 14 to 104 (LKRLAKYVIR…NYRTLVNVVK (91 aa)) constitute an HTH TFE/IIEalpha-type domain. K67 is modified (N6-acetyllysine). Zn(2+) is bound by residues C129, C132, C154, and C157. The C4-type zinc-finger motif lies at 129 to 157 (CPVCCSTFTDLEANQLFDPMTGTFRCTFC). Residue S268 is modified to Phosphoserine. The segment covering 333-353 (SSVTAGSVGAAAPVTAANGSD) has biased composition (low complexity). The segment at 333-395 (SSVTAGSVGA…EEFEEVADDP (63 aa)) is disordered. Composition is skewed to acidic residues over residues 354-364 (SESETSESDDD) and 381-393 (EDEEDEEFEEVAD).

This sequence belongs to the TFIIE alpha subunit family. Tetramer of two alpha and two beta chains. Interacts with TAF6/TAFII80. Interacts with ATF7IP. Interacts with SND1. Part of TBP-based Pol II pre-initiation complex (PIC), in which Pol II core assembles with general transcription factors and other specific initiation factors including GTF2E1, GTF2E2, GTF2F1, GTF2F2, TCEA1, ERCC2, ERCC3, GTF2H2, GTF2H3, GTF2H4, GTF2H5, GTF2A1, GTF2A2, GTF2B and TBP; this large multi-subunit PIC complex mediates DNA unwinding and targets Pol II core to the transcription start site where the first phosphodiester bond forms.

It is found in the nucleus. Recruits TFIIH to the initiation complex and stimulates the RNA polymerase II C-terminal domain kinase and DNA-dependent ATPase activities of TFIIH. Both TFIIH and TFIIE are required for promoter clearance by RNA polymerase. The sequence is that of General transcription factor IIE subunit 1 (Gtf2e1) from Mus musculus (Mouse).